The primary structure comprises 284 residues: Acetylglutamate kinase (284 aa).

Substrate-binding positions include 64–65, arginine 86, and asparagine 179; that span reads GG.

This sequence belongs to the acetylglutamate kinase family. ArgB subfamily.

The protein resides in the cytoplasm. It catalyses the reaction N-acetyl-L-glutamate + ATP = N-acetyl-L-glutamyl 5-phosphate + ADP. It participates in amino-acid biosynthesis; L-arginine biosynthesis; N(2)-acetyl-L-ornithine from L-glutamate: step 2/4. Functionally, catalyzes the ATP-dependent phosphorylation of N-acetyl-L-glutamate. This is Acetylglutamate kinase from Acaryochloris marina (strain MBIC 11017).